A 1176-amino-acid polypeptide reads, in one-letter code: Pesticidal crystal protein Cry1Aa (1176 aa).

Belongs to the delta endotoxin family.

In terms of biological role, promotes colloidosmotic lysis by binding to the midgut epithelial cells of many lepidopteran larvae. The protein is Pesticidal crystal protein Cry1Aa (cry1Aa) of Bacillus thuringiensis subsp. entomocidus.